The primary structure comprises 1394 residues: ATP-dependent permease AUS1 (1394 aa).

The Cytoplasmic segment spans residues 1–420 (MSISKYFTPV…PLTTIGSYSR (420 aa)). The ABC transporter 1 domain occupies 33–273 (KKSYDAEDSM…FRDTLGIEKD (241 aa)). Transmembrane regions (helical) follow at residues 421–443 (GSLT…PIAF), 468–490 (TVFD…YFLA), 497–519 (ARFF…LFAL), 529–551 (VANL…VIYL), 558–575 (FVWI…EAIL), and 636–658 (VWRN…LFAS). The Cytoplasmic portion of the chain corresponds to 659-1080 (QYIKPYFNKD…QYICTKRDMT (422 aa)). The ABC transporter 2 domain occupies 751–978 (ISWKNINYTV…YFMSHDNTLV (228 aa)). An ATP-binding site is contributed by 782–789 (GESGAGKT). The next 6 membrane-spanning stretches (helical) occupy residues 1081–1103 (YVMA…FWHI), 1107–1129 (IIGL…PLIN), 1156–1178 (VLLL…LFFV), 1193–1215 (AGVF…LWLI), 1224–1246 (AAVF…QPYS), and 1346–1368 (FGIE…YLTY). The Cytoplasmic portion of the chain corresponds to 1369–1394 (VARIWPKVFKIITKVIPHRGKKPVQN).

This sequence belongs to the ABC transporter superfamily. ABCG family. PDR (TC 3.A.1.205) subfamily.

It is found in the membrane. Transporter involved in the uptake of sterol. This chain is ATP-dependent permease AUS1 (AUS1), found in Saccharomyces cerevisiae (strain ATCC 204508 / S288c) (Baker's yeast).